A 341-amino-acid chain; its full sequence is Ubiquinone biosynthesis protein COQ4, mitochondrial (341 aa).

The transit peptide at 1–16 (MLSRISSVRIGTQVRQ) directs the protein to the mitochondrion. 4 residues coordinate Zn(2+): His220, Asp221, His224, and Glu236.

Belongs to the COQ4 family. As to quaternary structure, component of a multi-subunit COQ enzyme complex, composed of at least COQ3, COQ4, COQ5, COQ6, COQ7 and COQ9. It depends on Zn(2+) as a cofactor.

The protein resides in the mitochondrion inner membrane. It catalyses the reaction a 4-hydroxy-3-methoxy-5-(all-trans-polyprenyl)benzoate + H(+) = a 2-methoxy-6-(all-trans-polyprenyl)phenol + CO2. It participates in cofactor biosynthesis; ubiquinone biosynthesis. Lyase that catalyzes the C1-decarboxylation of 4-hydroxy-3-methoxy-5-(all-trans-polyprenyl)benzoic acid into 2-methoxy-6-(all-trans-polyprenyl)phenol during ubiquinone biosynthesis. This is Ubiquinone biosynthesis protein COQ4, mitochondrial from Vanderwaltozyma polyspora (strain ATCC 22028 / DSM 70294 / BCRC 21397 / CBS 2163 / NBRC 10782 / NRRL Y-8283 / UCD 57-17) (Kluyveromyces polysporus).